Here is a 521-residue protein sequence, read N- to C-terminus: Type-1 glutamine synthetase 2 (521 aa).

One can recognise a GS beta-grasp domain in the interval 76 to 176 (NQIKISKSPF…FLMDFIGTNG (101 aa)). In terms of domain architecture, GS catalytic spans 183–521 (PRSTLKKVIK…WELERYLEII (339 aa)).

It belongs to the glutamine synthetase family.

The enzyme catalyses L-glutamate + NH4(+) + ATP = L-glutamine + ADP + phosphate + H(+). The sequence is that of Type-1 glutamine synthetase 2 (glnA2) from Dictyostelium discoideum (Social amoeba).